The sequence spans 308 residues: Cap-specific mRNA (nucleoside-2'-O-)-methyltransferase (308 aa).

Tyrosine 30 contacts mRNA. 8 residues coordinate S-adenosyl-L-methionine: glutamine 46, tyrosine 74, glycine 76, glycine 80, aspartate 103, arginine 105, valine 124, and aspartate 147. The interval 177-257 (PIASSLKWRC…NTKIRPKIVL (81 aa)) is binding to NPH-I. Lysine 183 (for methyltransferase activity) is an active-site residue. MRNA-binding positions include 185 to 188 (RCPF), aspartate 190, 213 to 215 (SAE), and glutamate 241.

The protein belongs to the class I-like SAM-binding methyltransferase superfamily. Poxvirus/kinetoplastid 2'-O-MTase family. Interacts with poly(A) polymerase catalytic subunit OPG063. Interacts with OPG109 and OPG123; these interactions might help linking transcription to capping and polyadenylation.

Its subcellular location is the virion. The enzyme catalyses a 5'-end (N(7)-methyl 5'-triphosphoguanosine)-ribonucleoside in mRNA + S-adenosyl-L-methionine = a 5'-end (N(7)-methyl 5'-triphosphoguanosine)-(2'-O-methyl-ribonucleoside) in mRNA + S-adenosyl-L-homocysteine + H(+). Displays methyltransferase, positive regulation of the poly(A) polymerase and transcription elongation activities. Involved in the modification of both mRNA ends and in intermediate and late gene positive transcription elongation. At the mRNAs 5' end, methylates the ribose 2' OH group of the first transcribed nucleotide, thereby producing a 2'-O-methylpurine cap. At the 3' end, functions as a processivity factor which stimulates the activity of the viral poly(A) polymerase OPG063 that creates mRNA's poly(A) tail. In the presence of OPG102, OPG063 does not dissociate from the RNA allowing tail elongation to around 250 adenylates. This Fowlpox virus (strain NVSL) (FPV) protein is Cap-specific mRNA (nucleoside-2'-O-)-methyltransferase (OPG102).